A 255-amino-acid polypeptide reads, in one-letter code: 4-hydroxy-tetrahydrodipicolinate reductase (255 aa).

NAD(+)-binding positions include 9-14 (GFKGKM), Asp35, 89-91 (GTT), and 115-118 (APNF). The Proton donor/acceptor role is filled by His145. Residue His146 participates in (S)-2,3,4,5-tetrahydrodipicolinate binding. Lys149 (proton donor) is an active-site residue. 155–156 (GT) serves as a coordination point for (S)-2,3,4,5-tetrahydrodipicolinate.

This sequence belongs to the DapB family.

Its subcellular location is the cytoplasm. The enzyme catalyses (S)-2,3,4,5-tetrahydrodipicolinate + NAD(+) + H2O = (2S,4S)-4-hydroxy-2,3,4,5-tetrahydrodipicolinate + NADH + H(+). It catalyses the reaction (S)-2,3,4,5-tetrahydrodipicolinate + NADP(+) + H2O = (2S,4S)-4-hydroxy-2,3,4,5-tetrahydrodipicolinate + NADPH + H(+). The protein operates within amino-acid biosynthesis; L-lysine biosynthesis via DAP pathway; (S)-tetrahydrodipicolinate from L-aspartate: step 4/4. In terms of biological role, catalyzes the conversion of 4-hydroxy-tetrahydrodipicolinate (HTPA) to tetrahydrodipicolinate. The chain is 4-hydroxy-tetrahydrodipicolinate reductase from Streptococcus pneumoniae (strain P1031).